The primary structure comprises 254 residues: 5'-nucleotidase SurE (254 aa).

The a divalent metal cation site is built by Asp8, Asp9, Ser39, and Asn91.

This sequence belongs to the SurE nucleotidase family. It depends on a divalent metal cation as a cofactor.

It is found in the cytoplasm. It catalyses the reaction a ribonucleoside 5'-phosphate + H2O = a ribonucleoside + phosphate. Functionally, nucleotidase that shows phosphatase activity on nucleoside 5'-monophosphates. This chain is 5'-nucleotidase SurE, found in Pseudoalteromonas translucida (strain TAC 125).